The sequence spans 841 residues: Nuclear RNA export factor 2 (841 aa).

An RNA-binding unit probably involved in Piwi-dependent recruitment and single-stranded RNA-PPNP complex formation region spans residues 1 to 285 (MPNQMRVLDF…NFELVDGKPF (285 aa)). LRR repeat units lie at residues 200–221 (RLNG…TLLA), 224–245 (DYAL…CRAL), and 249–270 (RARE…PANI). Positions 286-553 (NMLHKIFSPL…EYVRAVKEVF (268 aa)) are necessary for silencing function. The RRM domain occupies 325–408 (WHAFMIPDPS…IFRYYLRMNV (84 aa)). LRR repeat units follow at residues 475–496 (TCSE…HVLG), 500–521 (CLRA…HSLG), and 524–545 (PLKS…PSEY). Residues 585–758 (LVGAFLENYL…LKIANERLHI (174 aa)) form the NTF2 domain. In terms of domain architecture, TAP-C spans 788–841 (DVKDHKLLLFQEVTGLISTWVTSIVEEADWDFERALKLFIQKNADHEIPDLAFA).

This sequence belongs to the NXF family. As to quaternary structure, in the ovaries, part of a complex composed of at least Panx, nxf2, piwi and Nxt1. The complex is knowns as Panx-induced cotranscriptional silencing (PICTS) complex, Panx-nxf2-dependent TAP/p15 silencing (Pandas complex), SFiNX (silencing factor interacting nuclear export variant) or piwi-Panx-nxf2-p15 (PPNP) complex. Interacts (via TAP-C domain) with Panx (via NIR region); the interaction is direct. Interacts (via NTF2 domain) with Nxt1; the interaction is direct and prevents Nxt1 binding to nucleoporins. Interacts with sbr/Nxf1. As to expression, expressed in female gonads (at protein level). Expressed ubiquitously.

It is found in the cytoplasm. The protein resides in the nucleus. The protein localises to the nucleoplasm. May be involved in the export of mRNA from the nucleus to the cytoplasm. In the ovaries, forms a complex with nxf2, piwi and Nxt1 which acts as effectors of cotranscriptional transposon silencing. On recruitment to a target transcript, interacts with single stranded RNA, thereby anchoring the complex via the nascent target transcript to chromatin and allowing Panx to recruit silencing effectors to establishing repressive heterochromatin at transposon loci. Does not affect piRNA biogenesis. The interaction with Panx stabilizes the nuclear protein complex. Does not bind nucleoporins, but regulates sbr/Nxf1 binding to nucleoporins and, indirectly, transposon exports. This is Nuclear RNA export factor 2 (nxf2) from Drosophila melanogaster (Fruit fly).